Consider the following 417-residue polypeptide: Creatine kinase U-type, mitochondrial (417 aa).

A mitochondrion-targeting transit peptide spans 1–39 (MAGPFSRLLSARPGLRLLALAGAGSLAAGFLLRPEPVRA). The cardiolipin-binding stretch occupies residues 40 to 64 (ASERRRLYPPSAEYPDLRKHNNCMA). Residues 45-131 (RLYPPSAEYP…FDPVIQERHN (87 aa)) enclose the Phosphagen kinase N-terminal domain. Position 151 is a phosphoserine (S151). The 243-residue stretch at 158-400 (YVLSSRVRTG…NYLIDCERRL (243 aa)) folds into the Phosphagen kinase C-terminal domain. ATP is bound at residue 161–165 (SSRVR). S196 bears the Phosphoserine mark. Residue T213 is modified to Phosphothreonine. H224 is a binding site for ATP. The residue at position 232 (S232) is a Phosphoserine. Residues R269, R325, 353 to 358 (RGTGGV), and D368 each bind ATP. T355 is modified (phosphothreonine).

It belongs to the ATP:guanido phosphotransferase family. In terms of assembly, exists as an octamer composed of four MTCK homodimers.

Its subcellular location is the mitochondrion inner membrane. It catalyses the reaction creatine + ATP = N-phosphocreatine + ADP + H(+). Its function is as follows. Reversibly catalyzes the transfer of phosphate between ATP and various phosphogens (e.g. creatine phosphate). Creatine kinase isoenzymes play a central role in energy transduction in tissues with large, fluctuating energy demands, such as skeletal muscle, heart, brain and spermatozoa. The protein is Creatine kinase U-type, mitochondrial (CKMT1A) of Homo sapiens (Human).